Consider the following 999-residue polypeptide: Translation initiation factor IF-2 (999 aa).

The interval 50 to 407 is disordered; sequence AFVNNTGSPA…RGQGQTVRLS (358 aa). Composition is skewed to pro residues over residues 60 to 89 and 96 to 121; these read PAAPPAATPPTPTPTPTPPRTPTPAPPPGG and PMPPRRPGAPTPGPKPKGPVPGPPQS. The segment covering 136–162 has biased composition (low complexity); sequence VAAAEARAAALKAEQEAAVKAAQAARQ. The span at 163 to 173 shows a compositional bias: basic and acidic residues; it reads QQRDNVRREPP. Over residues 179-194 the composition is skewed to pro residues; it reads RPGPRPGPGAMPPRPG. Positions 213-222 are enriched in low complexity; the sequence is GGRPPARGAG. Pro residues predominate over residues 244–266; that stretch reads RPSPASMPPRPSPASMPPRPSPA. Gly residues predominate over residues 275–367; that stretch reads RPGGPGSGRP…GAAGAFGRPG (93 aa). Residues 371-380 show a composition bias toward basic residues; it reads TRGRKSKKQR. Residues 388-405 show a composition bias toward polar residues; that stretch reads SAPTMSSGAPRGQGQTVR. Residues 490-662 enclose the tr-type G domain; the sequence is SRPPVVTVMG…VLLTADASLE (173 aa). Residues 499-506 are G1; the sequence is GHVDHGKT. Position 499-506 (499-506) interacts with GTP; sequence GHVDHGKT. A G2 region spans residues 524-528; the sequence is GITQH. Residues 549 to 552 form a G3 region; that stretch reads DTPG. GTP-binding positions include 549-553 and 603-606; these read DTPGH and NKID. The interval 603–606 is G4; that stretch reads NKID. The G5 stretch occupies residues 639-641; the sequence is AAK.

The protein belongs to the TRAFAC class translation factor GTPase superfamily. Classic translation factor GTPase family. IF-2 subfamily.

Its subcellular location is the cytoplasm. Its function is as follows. One of the essential components for the initiation of protein synthesis. Protects formylmethionyl-tRNA from spontaneous hydrolysis and promotes its binding to the 30S ribosomal subunits. Also involved in the hydrolysis of GTP during the formation of the 70S ribosomal complex. This Salinispora tropica (strain ATCC BAA-916 / DSM 44818 / JCM 13857 / NBRC 105044 / CNB-440) protein is Translation initiation factor IF-2.